The chain runs to 428 residues: Aminotransferase verI (428 aa).

Lysine 254 is subject to N6-(pyridoxal phosphate)lysine.

Belongs to the class-I pyridoxal-phosphate-dependent aminotransferase family. Pyridoxal 5'-phosphate serves as cofactor.

The protein operates within mycotoxin biosynthesis. Aminotransferase; part of the gene cluster that mediates the biosynthesis of 11'-deoxyverticillin A, one of the dimeric epipolythiodioxopiperazines (ETPs) from the verticillin family that act as mycotoxins. 11'-deoxyverticillin A is required for normal conidiation. The nonribosomal peptide synthetase verP is speculated to be responsible for condensation of amino acids to form the carbon skeleton of verticillin, whereas the cluster-specific tailoring enzymes are involved in further modifications leading to the production of 11'-deoxyverticillin A. In Clonostachys rogersoniana, this protein is Aminotransferase verI.